The primary structure comprises 250 residues: 5'-nucleotidase SurE (250 aa).

A divalent metal cation-binding residues include D8, D9, S39, and N91.

Belongs to the SurE nucleotidase family. A divalent metal cation serves as cofactor.

The protein localises to the cytoplasm. It catalyses the reaction a ribonucleoside 5'-phosphate + H2O = a ribonucleoside + phosphate. Its function is as follows. Nucleotidase that shows phosphatase activity on nucleoside 5'-monophosphates. In Leptospira interrogans serogroup Icterohaemorrhagiae serovar copenhageni (strain Fiocruz L1-130), this protein is 5'-nucleotidase SurE.